A 235-amino-acid polypeptide reads, in one-letter code: Transmembrane emp24 domain-containing protein 9 (235 aa).

Positions 1-37 (MAAERSLWVVGLCPGSRLGRVVRVLLLLLWFAARGGA) are cleaved as a signal peptide. Residues 38–201 (LYFHIGETEK…FRQTSESTNQ (164 aa)) are Lumenal-facing. The region spanning 47 to 145 (KKCFIEEIPD…MLRVHLDIQV (99 aa)) is the GOLD domain. The required for interaction with STX17 stretch occupies residues 121-160 (CLHSNSTKFSLFAGGMLRVHLDIQVGEHANDYAEIAAKDK). N-linked (GlcNAc...) asparagine glycosylation occurs at asparagine 125. Positions 154 to 184 (EIAAKDKLSELQLRVRQLVEQVEQIQKEQNY) form a coiled coil. An N6-acetyllysine modification is found at lysine 160. A helical membrane pass occupies residues 202–222 (RVLWWSILQTLILVAIGVWQM). The Cytoplasmic portion of the chain corresponds to 223–235 (RHLKSFFEAKKLV). A COPII vesicle coat-binding motif is present at residues 228 to 229 (FF). The COPI vesicle coat-binding signature appears at 228–235 (FFEAKKLV).

It belongs to the EMP24/GP25L family. As to quaternary structure, monomer and homodimer in endoplasmic reticulum. Predominantly monomeric and to lesser extent homodimeric in endoplasmic reticulum-Golgi intermediate compartment and cis-Golgi network. Probably oligomerizes with other members of the EMP24/GP25L family such as TMED2, TMED7 and TMED10. Interacts with TMED5. Interacts (via C-terminus) with COPG1; the interaction involves dimeric TMED9. Interacts with PTPN2 and SPAST. Interacts with STX17; the interaction is direct. In terms of processing, N-linked glycosylated containing high mannose.

It is found in the endoplasmic reticulum membrane. It localises to the golgi apparatus. The protein resides in the cis-Golgi network membrane. Its subcellular location is the endoplasmic reticulum-Golgi intermediate compartment membrane. The protein localises to the trans-Golgi network membrane. Its function is as follows. Appears to be involved in vesicular protein trafficking, mainly in the early secretory pathway. In COPI vesicle-mediated retrograde transport involved in the coatomer recruitment to membranes of the early secretory pathway. Increases coatomer-dependent activity of ARFGAP2. Thought to play a crucial role in the specific retention of p24 complexes in cis-Golgi membranes; specifically contributes to the coupled localization of TMED2 and TMED10 in the cis-Golgi network. May be involved in organization of intracellular membranes, such as of the ER-Golgi intermediate compartment and the Golgi apparatus. Involved in ER localization of PTPN2. This is Transmembrane emp24 domain-containing protein 9 (TMED9) from Bos taurus (Bovine).